Here is a 448-residue protein sequence, read N- to C-terminus: Trk system potassium uptake protein TrkA homolog 1 (448 aa).

The RCK N-terminal 1 domain occupies 1 to 124; that stretch reads MKAVIIGAGE…RAQVGVDLMI (124 aa). Residues 7-11, D29, 70-71, and R101 each bind NAD(+); these read GAGEV and TG. Positions 144-225 constitute an RCK C-terminal 1 domain; sequence IDAEMFAEGK…MEDLESVFGS (82 aa). The region spanning 230–348 is the RCK N-terminal 2 domain; that stretch reads RTRILLIGCG…FEMVGIDMAV (119 aa). 232–262 contributes to the NAD(+) binding site; the sequence is RILLIGCGIVGMYLAKLIDKEENADLRIIEH. The RCK C-terminal 2 domain maps to 368–448; sequence QTLTTIEGER…AASEVEKYFK (81 aa).

Part of a potassium transport system. This Methanosarcina mazei (strain ATCC BAA-159 / DSM 3647 / Goe1 / Go1 / JCM 11833 / OCM 88) (Methanosarcina frisia) protein is Trk system potassium uptake protein TrkA homolog 1 (trkA1).